Consider the following 212-residue polypeptide: Pyridoxine/pyridoxamine 5'-phosphate oxidase (212 aa).

Residues 8-11 (RRNY) and K66 each bind substrate. FMN-binding positions include 61–66 (RIVLLK), 76–77 (FT), R82, K83, and Q105. Substrate is bound by residues Y123, R127, and S131. FMN-binding positions include 140-141 (QS) and W184. 190–192 (RLH) is a binding site for substrate. FMN is bound at residue R194.

This sequence belongs to the pyridoxamine 5'-phosphate oxidase family. In terms of assembly, homodimer. FMN is required as a cofactor.

It carries out the reaction pyridoxamine 5'-phosphate + O2 + H2O = pyridoxal 5'-phosphate + H2O2 + NH4(+). The catalysed reaction is pyridoxine 5'-phosphate + O2 = pyridoxal 5'-phosphate + H2O2. Its pathway is cofactor metabolism; pyridoxal 5'-phosphate salvage; pyridoxal 5'-phosphate from pyridoxamine 5'-phosphate: step 1/1. It participates in cofactor metabolism; pyridoxal 5'-phosphate salvage; pyridoxal 5'-phosphate from pyridoxine 5'-phosphate: step 1/1. Its function is as follows. Catalyzes the oxidation of either pyridoxine 5'-phosphate (PNP) or pyridoxamine 5'-phosphate (PMP) into pyridoxal 5'-phosphate (PLP). This is Pyridoxine/pyridoxamine 5'-phosphate oxidase from Cupriavidus metallidurans (strain ATCC 43123 / DSM 2839 / NBRC 102507 / CH34) (Ralstonia metallidurans).